The following is a 315-amino-acid chain: Porphobilinogen deaminase (315 aa).

Cysteine 234 is subject to S-(dipyrrolylmethanemethyl)cysteine.

This sequence belongs to the HMBS family. In terms of assembly, monomer. The cofactor is dipyrromethane.

It carries out the reaction 4 porphobilinogen + H2O = hydroxymethylbilane + 4 NH4(+). It participates in porphyrin-containing compound metabolism; protoporphyrin-IX biosynthesis; coproporphyrinogen-III from 5-aminolevulinate: step 2/4. Its function is as follows. Tetrapolymerization of the monopyrrole PBG into the hydroxymethylbilane pre-uroporphyrinogen in several discrete steps. The sequence is that of Porphobilinogen deaminase from Mycolicibacterium paratuberculosis (strain ATCC BAA-968 / K-10) (Mycobacterium paratuberculosis).